A 262-amino-acid polypeptide reads, in one-letter code: Probable carboxylesterase SOBER1-like (262 aa).

Residues S151, D205, and H237 each act as charge relay system in the active site.

It belongs to the AB hydrolase superfamily. AB hydrolase 2 family.

Carboxylesterase. The chain is Probable carboxylesterase SOBER1-like from Arabidopsis thaliana (Mouse-ear cress).